A 433-amino-acid chain; its full sequence is Protein disulfide-isomerase A6 homolog (433 aa).

The N-terminal stretch at 1–19 (MRQLASILLLAFVVGSVSA) is a signal peptide. Thioredoxin domains are found at residues 20–119 (FYSP…GQRT) and 120–267 (AKAI…KHVA). Catalysis depends on nucleophile residues Cys-55, Cys-58, Cys-186, and Cys-189. Intrachain disulfides connect Cys-55–Cys-58 and Cys-186–Cys-189. An N-linked (GlcNAc...) asparagine glycan is attached at Asn-279. The disordered stretch occupies residues 405-433 (VDPWDGKDGQLPTEEDIDLSDIDLDKDEL). The span at 417-433 (TEEDIDLSDIDLDKDEL) shows a compositional bias: acidic residues. A Prevents secretion from ER motif is present at residues 430–433 (KDEL).

The protein belongs to the protein disulfide isomerase family. As to quaternary structure, interacts with Drpr (via extracellular region). In terms of tissue distribution, in the blastoderm embryo, expression starts at the anterior and posterior poles and later appears as broad stripes. Following gastrulation, expressed in midline precursor cells and the posterior head with low levels present throughout the embryo. During germ band extension, weak dorsoventral stripes of expression are evident. Midline expression begins and is retained throughout embryogenesis in clusters of cells in each segment in the central nervous system. At least some of the midline expression occurs in VUM neurons.

It is found in the endoplasmic reticulum lumen. It localises to the cell surface. It catalyses the reaction Catalyzes the rearrangement of -S-S- bonds in proteins.. Its function is as follows. Binds to both apoptotic cells and phagocytes and promotes Drpr-dependent phagocytosis of apoptotic cells. This Drosophila melanogaster (Fruit fly) protein is Protein disulfide-isomerase A6 homolog.